Consider the following 336-residue polypeptide: MSAPIIAIDAMGGDFGPHCVVPASIAFLAENSSSQLILVGQPALLEELLSRYPSLDRQRLRVHAASEVIGSDERPSQALRGKPDASMRVALELVRDGRAHACVSAGNTGALMALSRHLLKTLPGIDRPAMVTAVPTEKGHCHLLDLGANVDCSAEHLYQFAVMGAVAAEALGCVSPRVALLNVGTEEIKGNQQVKLAASLLQKAQGLNFSGYIEGDGLYRGEADVVVCDGFVGNILLKASEGLAAMVSARIEQRFRDGLAAKLVGALALPLLRRLRGDIAPARYNGASFLGLQGIVVKSHGSAAEEGFQSALRRAALEVRENLPQRLHGRLEHLLL.

The protein belongs to the PlsX family. In terms of assembly, homodimer. Probably interacts with PlsY.

It localises to the cytoplasm. The catalysed reaction is a fatty acyl-[ACP] + phosphate = an acyl phosphate + holo-[ACP]. Its pathway is lipid metabolism; phospholipid metabolism. Catalyzes the reversible formation of acyl-phosphate (acyl-PO(4)) from acyl-[acyl-carrier-protein] (acyl-ACP). This enzyme utilizes acyl-ACP as fatty acyl donor, but not acyl-CoA. This Pseudomonas aeruginosa (strain UCBPP-PA14) protein is Phosphate acyltransferase.